We begin with the raw amino-acid sequence, 3013 residues long: Genome polyprotein (3013 aa).

An N-acetylserine; by host modification is found at Ser-2. The interval 2 to 23 (STLPKPQKRNQRNTNRRPQDVK) is interaction with STAT1. Residues 2 to 58 (STLPKPQKRNQRNTNRRPQDVKFPGGGQIVGGVYLLPRRGPRLGVRATRKTSERSQP) are interaction with EIF2AK2/PKR. The interaction with DDX3X stretch occupies residues 2-59 (STLPKPQKRNQRNTNRRPQDVKFPGGGQIVGGVYLLPRRGPRLGVRATRKTSERSQPR). The disordered stretch occupies residues 2 to 75 (STLPKPQKRN…PKARRQTGRT (74 aa)). Residues 2-168 (STLPKPQKRN…EDGINYATGN (167 aa)) are Cytoplasmic-facing. 2 short sequence motifs (nuclear localization signal) span residues 5-13 (PKPQKRNQR) and 38-43 (PRRGPR). Basic residues predominate over residues 7-16 (PQKRNQRNTN). The segment covering 32 to 47 (GGVYLLPRRGPRLGVR) has biased composition (low complexity). Ser-53 bears the Phosphoserine; by host mark. 2 consecutive short sequence motifs (nuclear localization signal) follow at residues 58–64 (PRGRRQP) and 66–71 (PKARRQ). Positions 58–72 (PRGRRQPIPKARRQT) are enriched in basic residues. 2 positions are modified to phosphoserine; by host: Ser-99 and Ser-116. Positions 112–152 (PRRRSRNLGKVIDTLTCGFADLMGYIPVVGAPLGGVAAALA) are important for endoplasmic reticulum and mitochondrial localization. The interaction with APOA2 stretch occupies residues 122–173 (VIDTLTCGFADLMGYIPVVGAPLGGVAAALAHGVRAVEDGINYATGNLPGCS). Positions 164 to 167 (YATG) are important for lipid droplets localization. Residues 169–189 (LPGCSFSIFLLALLSCLTTPA) form a helical membrane-spanning segment. The propeptide at 178–191 (LLALLSCLTTPASA) is ER anchor for the core protein, removed in mature form by host signal peptidase. At 190–358 (SAVHYANKSG…TGGHWGILAG (169 aa)) the chain is on the lumenal side. Asn-196, Asn-209, Asn-234, and Asn-250 each carry an N-linked (GlcNAc...) asparagine; by host glycan. Residues 265-296 (MVGAAAFCSAMYVGDLCGGIFLVGQLFSFNPR) are important for fusion. The N-linked (GlcNAc...) asparagine; by host glycan is linked to Asn-305. A helical membrane pass occupies residues 359-379 (ILYYSMVANWAKVLCILFLFA). At 380-723 (GVDATTRTTG…WEYVVLAFLL (344 aa)) the chain is on the lumenal side. Positions 385 to 412 (TRTTGAQAARATLGFTGLFQTGAKQNIH) are HVR1. Residues Asn-417, Asn-423, and Asn-430 are each glycosylated (N-linked (GlcNAc...) (high mannose) asparagine; by host). 4 cysteine pairs are disulfide-bonded: Cys-429–Cys-553, Cys-452–Cys-459, Cys-487–Cys-495, and Cys-504–Cys-509. Residue Asn-448 is glycosylated (N-linked (GlcNAc...) asparagine; by host). The segment at 475 to 479 (ANVSG) is HVR2. A glycan (N-linked (GlcNAc...) asparagine; by host) is linked at Asn-476. The CD81-binding 1 stretch occupies residues 481 to 494 (SEDRPYCWHYAPRP). The N-linked (GlcNAc...) asparagine; by host glycan is linked to Asn-533. Residues 545–552 (PPAGAWYG) form a CD81-binding 2 region. Asn-557 carries an N-linked (GlcNAc...) asparagine; by host glycan. Intrachain disulfides connect Cys-565-Cys-570, Cys-579-Cys-583, Cys-595-Cys-618, and Cys-605-Cys-642. N-linked (GlcNAc...) (high mannose) asparagine; by host glycans are attached at residues Asn-621 and Asn-643. Cys-650 and Cys-675 are disulfide-bonded. Residues 658 to 669 (IEMSPLLFSTTE) are PKR/eIF2-alpha phosphorylation homology domain (PePHD). Residues 724–744 (LADARICACLWMVLLISQVEA) traverse the membrane as a helical segment. Over 745–755 (ALENLIVLNAA) the chain is Lumenal. Residues 756 to 776 (SAASSQGWIYCLVFICCAWYI) traverse the membrane as a helical segment. At 777–780 (KGRV) the chain is on the cytoplasmic side. The helical transmembrane segment at 781 to 801 (VPGATYAILHLWPLLLLVLAL) threads the bilayer. The Lumenal portion of the chain corresponds to 802–811 (PQRAYAQDRE). The chain crosses the membrane as a helical span at residues 812-832 (QGASIGVVVIAAITIFTLTPA). Topologically, residues 833–879 (YKTMLVHFLWWNQYFIARSEALIQQWVPSLRVRGGRDAVILLTCLLH) are cytoplasmic. Residues 880-900 (PSLGFDITKMLLALLGPLYLL) traverse the membrane as a helical segment. At 901–926 (QVSLLRVPYYVRAHALLRVCILVRRV) the chain is on the lumenal side. Positions 901–1024 (QVSLLRVPYY…DMKSMGWRLL (124 aa)) constitute a Peptidase C18 domain. Residues 902–1204 (VSLLRVPYYV…PVENMETTMR (303 aa)) are protease NS2-3. Cys-920 carries the S-palmitoyl cysteine; by host lipid modification. A helical transmembrane segment spans residues 927–947 (AGGKYIQAALLKLGAWTGTYI). The tract at residues 927–947 (AGGKYIQAALLKLGAWTGTYI) is interaction with host SCPS1. Residues 948 to 1655 (YDHLAPLSTW…CMAADLEVIT (708 aa)) lie on the Cytoplasmic side of the membrane. Catalysis depends on for protease NS2 activity; shared with dimeric partner residues His-950, Glu-970, and Cys-991. The region spanning 1025–1206 (APITAYCQQT…ENMETTMRSP (182 aa)) is the Peptidase S29 domain. Active-site charge relay system; for serine protease NS3 activity residues include His-1081 and Asp-1105. Zn(2+)-binding residues include Cys-1121 and Cys-1123. Ser-1163 serves as the catalytic Charge relay system; for serine protease NS3 activity. Zn(2+)-binding residues include Cys-1169 and His-1173. Residues 1215-1367 (PAVPQTYQVG…PNITETALPS (153 aa)) enclose the Helicase ATP-binding domain. An ATP-binding site is contributed by 1228-1235 (APTGSGKS). Positions 1235 and 1315 each coordinate Mg(2+). Positions 1314–1317 (DECH) match the DECH box motif. Residues 1374-1536 (YGKAIPLECI…ELTPSETTVR (163 aa)) form the Helicase C-terminal domain. The RNA-binding stretch occupies residues 1484–1496 (QRRGRTGRGKPGV). Residues 1656 to 1676 (STWVLAGGIVAALAAYCLTVG) form a helical membrane-spanning segment. The tract at residues 1677–1688 (SVVICGRIVTSG) is NS3-binding. The Cytoplasmic portion of the chain corresponds to 1677–1803 (SVVICGRIVT…ALTSPLSTST (127 aa)). The chain crosses the membrane as a helical span at residues 1804-1824 (TLLLNILGGWVASQLAPPTAS). The Lumenal segment spans residues 1825–1826 (TA). Residues 1827–1847 (FVVSGLAGAAVGSIGLGKVII) traverse the membrane as a helical segment. Position 1848 (Asp-1848) is a topological domain, cytoplasmic. A helical transmembrane segment spans residues 1849-1869 (ILAGYGAGVSGALVAFKIMSG). At 1870-1879 (EAPAVEDMVN) the chain is on the lumenal side. The chain crosses the membrane as a helical span at residues 1880–1900 (LLPALLSPGALVVGVVCAAVL). At 1901–1970 (RRHVGPSEGA…WISGDWSAPC (70 aa)) the chain is on the cytoplasmic side. A lipid anchor (S-palmitoyl cysteine; by host) is attached at Cys-1970. The stretch at 1971-2000 (SCSWLKDVWDWVCTVLSDFKTWLRAKLVPT) is an intramembrane region. Residues 2001–2992 (LPGIPFISCQ…FHSVSRARPR (992 aa)) are Cytoplasmic-facing. The Zn(2+) site is built by Cys-2009, Cys-2027, Cys-2029, and Cys-2050. An FKBP8-binding region spans residues 2118–2206 (EFFTEVDGVR…ASSSASQLSA (89 aa)). The tract at residues 2118–2331 (EFFTEVDGVR…PVPPPRKKRV (214 aa)) is transcriptional activation. Residues 2133–2137 (PPCRP) are interaction with non-structural protein 4A. The segment at 2187 to 2440 (RLARGSPPSL…ALITPCAAEE (254 aa)) is interaction with host SKP2. Ser-2192, Ser-2195, Ser-2199, Ser-2202, Ser-2205, and Ser-2208 each carry phosphoserine; by host. Residues 2208 to 2247 (SLKATCTTAGKHPDAELIEANLLWRQEVGGNITRVESENK) form an ISDR region. An interaction with EIF2AK2/PKR region spans residues 2208–2273 (SLKATCTTAG…REISVGAECF (66 aa)). Residues 2247–2305 (KIIVLDSFDPLIAETDDREISVGAECFNPPRPKFPPALPVWARPDYNPPLLQPWKAPDY) are NS4B-binding. Residues 2298–2376 (QPWKAPDYEP…STLSSDMTPP (79 aa)) are V3. Positions 2316–2411 (PPKGLPPVPP…PDLSSGSWST (96 aa)) are disordered. The SH3-binding motif lies at 2321–2324 (PPVP). A Nuclear localization signal motif is present at residues 2326 to 2334 (PRKKRVVQL). Over residues 2347–2373 (AQTSFPPSTATLSEDSGRETSTLSSDM) the composition is skewed to polar residues. Residues 2375–2385 (PPREEADRASD) are compositionally biased toward basic and acidic residues. Position 2464 is a phosphoserine; by host (Ser-2464). The RdRp catalytic domain maps to 2636–2754 (PMGFSYDTRC…ISESMGVAED (119 aa)). 3 residues coordinate Mg(2+): Asp-2642, Asp-2740, and Asp-2741. The chain crosses the membrane as a helical span at residues 2993 to 3013 (NLLLCLLLLTVGVGIFLLPAR).

Belongs to the hepacivirus polyprotein family. As to quaternary structure, homooligomer. Interacts with E1 (via C-terminus). Interacts with the non-structural protein 5A. Interacts (via N-terminus) with host STAT1 (via SH2 domain); this interaction results in decreased STAT1 phosphorylation and ubiquitin-mediated proteasome-dependent STAT1 degradation, leading to decreased IFN-stimulated gene transcription. Interacts with host STAT3; this interaction constitutively activates STAT3. Interacts with host LTBR receptor. Interacts with host TNFRSF1A receptor and possibly induces apoptosis. Interacts with host HNRPK. Interacts with host YWHAE. Interacts with host UBE3A/E6AP. Interacts with host DDX3X. Interacts with host APOA2. Interacts with host RXRA protein. Interacts with host SP110 isoform 3/Sp110b; this interaction sequesters the transcriptional corepressor SP110 away from the nucleus. Interacts with host CREB3 nuclear transcription protein; this interaction triggers cell transformation. Interacts with host ACY3. Interacts with host C1QR1. Interacts with host RBM24; this interaction, which enhances the interaction of the mature core protein with 5'-UTR, may inhibit viral translation and favor replication. Interacts with host EIF2AK2/PKR; this interaction induces the autophosphorylation of EIF2AK2. Part of the viral assembly initiation complex composed of NS2, E1, E2, NS3, NS4A, NS5A and the mature core protein. In terms of assembly, forms a heterodimer with envelope glycoprotein E2. Interacts with mature core protein. Interacts with protease NS2. The heterodimer E1/E2 interacts with host CLDN1; this interaction plays a role in viral entry into host cell. Interacts with host SPSB2 (via C-terminus). Part of the viral assembly initiation complex composed of NS2, E1, E2, NS3, NS4A, NS5A and the mature core protein. Interacts with host NEURL3; this interaction prevents E1 binding to glycoprotein E2. Forms a heterodimer with envelope glycoprotein E1. Interacts with host CD81 and SCARB1 receptors; these interactions play a role in viral entry into host cell. Interacts with host EIF2AK2/PKR; this interaction inhibits EIF2AK2 and probably allows the virus to evade the innate immune response. Interacts with host CD209/DC-SIGN and CLEC4M/DC-SIGNR. Interact with host SPCS1; this interaction is essential for viral particle assembly. Interacts with protease NS2. The heterodimer E1/E2 interacts with host CLDN1; this interaction plays a role in viral entry into host cell. Part of the viral assembly initiation complex composed of NS2, E1, E2, NS3, NS4A, NS5A and the mature core protein. Interacts with host SLC3A2/4F2hc; the interaction may facilitate viral entry into host cell. Interacts with human PLSCR1. As to quaternary structure, homohexamer. Homoheptamer. Interacts with protease NS2. In terms of assembly, homodimer. Interacts with host SPCS1; this interaction is essential for viral particle assembly. Interacts with envelope glycoprotein E1. Interacts with envelope glycoprotein E2. Interacts with viroporin p7. Interacts with serine protease/helicase NS3. Part of the replication complex composed of NS2, NS3, NS4A, NS4B, NS5A and the RNA-directed RNA polymerase embedded in an ER-derived membranous web. Part of the viral assembly initiation complex composed of NS2, E1, E2, NS3, NS4A, NS5A and the mature core protein. Interacts with protease NS2. Interacts with non-structural protein 4A; this interaction stabilizes the folding of NS3 serine protease. NS3-NS4A interaction is essential for NS3 activation and allows membrane anchorage of the latter. NS3/NS4A complex also prevents phosphorylation of host IRF3, thus preventing the establishment of dsRNA induced antiviral state. Interacts with host MAVS; this interaction leads to the cleavage and inhibition of host MAVS. Interacts with host TICAM1; this interaction leads to the cleavage and inhibition of host TICAM1. Interacts with host TANK-binding kinase/TBK1; this interaction results in the inhibition of the association between TBK1 and IRF3, which leads to the inhibition of IRF3 activation. Interacts with host RBM24. Part of the replication complex composed of NS2, NS3, NS4A, NS4B, NS5A and the RNA-directed RNA polymerase embedded in an ER-derived membranous web. Part of the viral assembly initiation complex composed of NS2, E1, E2, NS3, NS4A, NS5A and the mature core protein. As to quaternary structure, interacts with NS3 serine protease; this interaction stabilizes the folding of NS3 serine protease. NS3-NS4A interaction is essential for NS3 activation and allows membrane anchorage of the latter. Interacts with non-structural protein 5A (via N-terminus). Part of the replication complex composed of NS2, NS3, NS4A, NS4B, NS5A and the RNA-directed RNA polymerase embedded in an ER-derived membranous web. Part of the viral assembly initiation complex composed of NS2, E1, E2, NS3, NS4A, NS5A and the mature core protein. In terms of assembly, homomultimer. Interacts with non-structural protein NS5A. Interacts with host PLA2G4C; this interaction likely initiates the recruitment of replication complexes to lipid droplets. Interacts with host STING; this interaction disrupts the interaction between STING and TBK1 thereby suppressing the interferon signaling. Part of the replication complex composed of NS2, NS3, NS4A, NS4B, NS5A and the RNA-directed RNA polymerase embedded in an ER-derived membranous web. Monomer. Homodimer; dimerization is required for RNA-binding. Interacts with the mature core protein. Interacts (via N-terminus) with non-structural protein 4A. Interacts with non-structural protein 4B. Interacts (via region D2) with RNA-directed RNA polymerase. Part of the viral assembly initiation complex composed of NS2, E1, E2, NS3, NS4A, NS5A and the mature core protein. Part of the replication complex composed of NS2, NS3, NS4A, NS4B, NS5A and the RNA-directed RNA polymerase embedded in an ER-derived membranous web. Interacts with host GRB2. Interacts with host BIN1. Interacts with host PIK3R1. Interacts with host SRCAP. Interacts with host FKBP8. Interacts (via C-terminus) with host VAPB (via MSP domain). Interacts with host EIF2AK2/PKR; this interaction leads to disruption of EIF2AK2 dimerization by NS5A and probably allows the virus to evade the innate immune response. Interacts (via N-terminus) with host PACSIN2 (via N-terminus); this interaction attenuates protein kinase C alpha-mediated phosphorylation of PACSIN2 by disrupting the interaction between PACSIN2 and PRKCA. Interacts (via N-terminus) with host SRC kinase (via SH2 domain). Interacts with most Src-family kinases. Interacts with host IFI27 and SKP2; promotes the ubiquitin-mediated proteasomal degradation of NS5A. Interacts with host GPS2. Interacts with host TNFRSF21; this interaction allows the modulation by the virus of JNK, p38 MAPK, STAT3, and Akt signaling pathways in a DR6-dependent manner. Interacts (via N-terminus) with host CIDEB (via N-terminus); this interaction seems to regulate the association of HCV particles with APOE. Interacts with host CHKA/Choline Kinase-alpha; CHKA bridges host PI4KA and NS5A and potentiates NS5A-stimulated PI4KA activity, which then facilitates the targeting of the ternary complex to the ER for viral replication. Interacts with host SPSB2 (via C-terminus); this interaction targets NS5A for ubiquitination and degradation. Interacts with host RAB18; this interaction may promote the association of NS5A and other replicase components with lipid droplets. Interacts (via region D2) with host PPIA/CYPA; the interaction stimulates RNA-binding ability of NS5A and is dependent on the peptidyl-prolyl cis-trans isomerase activity of PPIA/CYPA. Interacts with host TRIM14; this interaction induces the degradation of NS5A. As to quaternary structure, homooligomer. Interacts with non-structural protein 5A. Interacts with host VAPB. Interacts with host PRK2/PKN2. Interacts with host HNRNPA1 and SEPT6; these interactions facilitate viral replication. Part of the replication complex composed of NS2, NS3, NS4A, NS4B, NS5A and the RNA-directed RNA polymerase. Zn(2+) serves as cofactor. It depends on Mg(2+) as a cofactor. Post-translationally, specific enzymatic cleavages in vivo yield mature proteins. The structural proteins, core, E1, E2 and p7 are produced by proteolytic processing by host signal peptidases. The core protein precursor is synthesized as a 23 kDa, which is retained in the ER membrane through the hydrophobic signal peptide. Cleavage by the signal peptidase releases the 21 kDa mature core protein. The cleavage of the core protein precursor occurs between aminoacids 176 and 188 but the exact cleavage site is not known. Some degraded forms of the core protein appear as well during the course of infection. The other proteins (p7, NS2, NS3, NS4A, NS4B, NS5A and NS5B) are cleaved by the viral proteases. Autoprocessing between NS2 and NS3 is mediated by the NS2 cysteine protease catalytic domain and regulated by the NS3 N-terminal domain. In terms of processing, phosphorylated by host PKC and PKA. Ubiquitinated; mediated by UBE3A and leading to core protein subsequent proteasomal degradation. Post-translationally, highly N-glycosylated. In terms of processing, palmitoylation is required for NS2/3 autoprocessing and E2 recruitment to membranes. Palmitoylated. This modification may play a role in its polymerization or in protein-protein interactions. Post-translationally, phosphorylated on serines in a basal form termed p56. p58 is a hyperphosphorylated form of p56. p56 and p58 coexist in the cell in roughly equivalent amounts. Hyperphosphorylation is dependent on the presence of NS4A. Host CSNK1A1/CKI-alpha or RPS6KB1 kinases may be responsible for NS5A phosphorylation. In terms of processing, tyrosine phosphorylation is essential for the interaction with host SRC. The N-terminus is phosphorylated by host PRK2/PKN2.

It localises to the host endoplasmic reticulum membrane. Its subcellular location is the host mitochondrion membrane. It is found in the virion. The protein localises to the host cytoplasm. The protein resides in the host nucleus. It localises to the host lipid droplet. Its subcellular location is the virion membrane. It is found in the host mitochondrion. The protein localises to the host cell membrane. The protein resides in the host perinuclear region. The enzyme catalyses Hydrolysis of four peptide bonds in the viral precursor polyprotein, commonly with Asp or Glu in the P6 position, Cys or Thr in P1 and Ser or Ala in P1'.. It carries out the reaction a ribonucleoside 5'-triphosphate + H2O = a ribonucleoside 5'-diphosphate + phosphate + H(+). The catalysed reaction is ATP + H2O = ADP + phosphate + H(+). It catalyses the reaction RNA(n) + a ribonucleoside 5'-triphosphate = RNA(n+1) + diphosphate. Its activity is regulated as follows. Inhibited by the antiviral drug hexamethylene amiloride. Inhibition by amantadine appears to be genotype-dependent. Also inhibited by long-alkyl-chain iminosugar derivatives. Activity is up-regulated by PRK2/PKN2-mediated phosphorylation. In terms of biological role, packages viral RNA to form a viral nucleocapsid, and promotes virion budding. Participates in the viral particle production as a result of its interaction with the non-structural protein 5A. Binds RNA and may function as a RNA chaperone to induce the RNA structural rearrangements taking place during virus replication. Modulates viral translation initiation by interacting with viral IRES and 40S ribosomal subunit. Affects various cell signaling pathways, host immunity and lipid metabolism. Prevents the establishment of cellular antiviral state by blocking the interferon-alpha/beta (IFN-alpha/beta) and IFN-gamma signaling pathways and by blocking the formation of phosphorylated STAT1 and promoting ubiquitin-mediated proteasome-dependent degradation of STAT1. Activates STAT3 leading to cellular transformation. Regulates the activity of cellular genes, including c-myc and c-fos. May repress the promoter of p53, and sequester CREB3 and SP110 isoform 3/Sp110b in the cytoplasm. Represses cell cycle negative regulating factor CDKN1A, thereby interrupting an important check point of normal cell cycle regulation. Targets transcription factors involved in the regulation of inflammatory responses and in the immune response: suppresses TNF-induced NF-kappa-B activation, and activates AP-1. Binds to dendritic cells (DCs) via C1QR1, resulting in down-regulation of T-lymphocytes proliferation. Alters lipid metabolism by interacting with hepatocellular proteins involved in lipid accumulation and storage. Induces up-regulation of FAS promoter activity, and thereby contributes to the increased triglyceride accumulation in hepatocytes (steatosis). Forms a heterodimer with envelope glycoprotein E2, which mediates virus attachment to the host cell, virion internalization through clathrin-dependent endocytosis and fusion with host membrane. Fusion with the host cell is most likely mediated by both E1 and E2, through conformational rearrangements of the heterodimer required for fusion rather than a classical class II fusion mechanism. E1/E2 heterodimer binds host apolipoproteins such as APOB and ApoE thereby forming a lipo-viro-particle (LVP). APOE associated to the LVP allows the initial virus attachment to cell surface receptors such as the heparan sulfate proteoglycans (HSPGs), syndecan-1 (SDC1), syndecan-1 (SDC2), the low-density lipoprotein receptor (LDLR) and scavenger receptor class B type I (SCARB1). The cholesterol transfer activity of SCARB1 allows E2 exposure and binding of E2 to SCARB1 and the tetraspanin CD81. E1/E2 heterodimer binding on CD81 activates the epithelial growth factor receptor (EGFR) signaling pathway. Diffusion of the complex E1-E2-EGFR-SCARB1-CD81 to the cell lateral membrane allows further interaction with Claudin 1 (CLDN1) and occludin (OCLN) to finally trigger HCV entry. Its function is as follows. Forms a heterodimer with envelope glycoprotein E1, which mediates virus attachment to the host cell, virion internalization through clathrin-dependent endocytosis and fusion with host membrane. Fusion with the host cell is most likely mediated by both E1 and E2, through conformational rearrangements of the heterodimer required for fusion rather than a classical class II fusion mechanism. The interaction between envelope glycoprotein E2 and host apolipoprotein E/APOE allows the proper assembly, maturation and infectivity of the viral particles. This interaction is probably promoted via the up-regulation of cellular autophagy by the virus. E1/E2 heterodimer binds host apolipoproteins such as APOB and APOE thereby forming a lipo-viro-particle (LVP). APOE associated to the LVP allows the initial virus attachment to cell surface receptors such as the heparan sulfate proteoglycans (HSPGs), syndecan-1 (SDC1), syndecan-1 (SDC2), the low-density lipoprotein receptor (LDLR) and scavenger receptor class B type I (SCARB1). The cholesterol transfer activity of SCARB1 allows E2 exposure and binding of E2 to SCARB1 and the tetraspanin CD81. E1/E2 heterodimer binding on CD81 activates the epithelial growth factor receptor (EGFR) signaling pathway. Diffusion of the complex E1-E2-EGFR-SCARB1-CD81 to the cell lateral membrane allows further interaction with Claudin 1 (CLDN1) and occludin (OCLN) to finally trigger HCV entry. Inhibits host EIF2AK2/PKR activation, preventing the establishment of an antiviral state. Viral ligand for CD209/DC-SIGN and CLEC4M/DC-SIGNR, which are respectively found on dendritic cells (DCs), and on liver sinusoidal endothelial cells and macrophage-like cells of lymph node sinuses. These interactions allow the capture of circulating HCV particles by these cells and subsequent facilitated transmission to permissive cells such as hepatocytes and lymphocyte subpopulations. The interaction between E2 and host amino acid transporter complex formed by SLC3A2 and SLC7A5/LAT1 may facilitate viral entry into host cell. Functionally, ion channel protein that acts as a viroporin and plays an essential role in the assembly, envelopment and secretion of viral particles. Regulates the host cell secretory pathway, which induces the intracellular retention of viral glycoproteins and favors assembly of viral particles. Creates a pore in acidic organelles and releases Ca(2+) and H(+) in the cytoplasm of infected cells, leading to a productive viral infection. High levels of cytoplasmic Ca(2+) may trigger membrane trafficking and transport of viral ER-associated proteins to viroplasms, sites of viral genome replication. This ionic imbalance induces the assembly of the inflammasome complex, which triggers the maturation of pro-IL-1beta into IL-1beta through the action of caspase-1. Targets also host mitochondria and induces mitochondrial depolarization. In addition of its role as a viroporin, acts as a lipid raft adhesion factor. In terms of biological role, cysteine protease required for the proteolytic auto-cleavage between the non-structural proteins NS2 and NS3. The N-terminus of NS3 is required for the function of NS2 protease (active region NS2-3). Promotes the initiation of viral particle assembly by mediating the interaction between structural and non-structural proteins. Displays three enzymatic activities: serine protease with a chymotrypsin-like fold, NTPase and RNA helicase. NS3 serine protease, in association with NS4A, is responsible for the cleavages of NS3-NS4A, NS4A-NS4B, NS4B-NS5A and NS5A-NS5B. The NS3/NS4A complex prevents phosphorylation of host IRF3, thus preventing the establishment of dsRNA induced antiviral state. The NS3/NS4A complex induces host amino acid transporter component SLC3A2, thus contributing to HCV propagation. NS3 RNA helicase binds to RNA and unwinds both dsDNA and dsRNA in the 3' to 5' direction, and likely resolves RNA complicated stable secondary structures in the template strand. Binds a single ATP and catalyzes the unzipping of a single base pair of dsRNA. Inhibits host antiviral proteins TBK1 and IRF3 thereby preventing the establishment of an antiviral state. Cleaves host MAVS/CARDIF thereby preventing the establishment of an antiviral state. Cleaves host TICAM1/TRIF, thereby disrupting TLR3 signaling and preventing the establishment of an antiviral state. Its function is as follows. Peptide cofactor which forms a non-covalent complex with the N-terminal of NS3 serine protease. The NS3/NS4A complex prevents phosphorylation of host IRF3, thus preventing the establishment of dsRNA induced antiviral state. The NS3/NS4A complex induces host amino acid transporter component SLC3A2, thus contributing to HCV propagation. Functionally, induces a specific membrane alteration that serves as a scaffold for the virus replication complex. This membrane alteration gives rise to the so-called ER-derived membranous web that contains the replication complex. NS4B self-interaction contributes to its function in membranous web formation. Promotes host TRIF protein degradation in a CASP8-dependent manner thereby inhibiting host TLR3-mediated interferon signaling. Disrupts the interaction between STING and TBK1 contributing to the inhibition of interferon signaling. In terms of biological role, phosphorylated protein that is indispensable for viral replication and assembly. Both hypo- and hyperphosphorylated states are required for the viral life cycle. The hyperphosphorylated form of NS5A is an inhibitor of viral replication. Involved in RNA-binding and especially in binding to the viral genome. Zinc is essential for RNA-binding. Participates in the viral particle production as a result of its interaction with the mature viral core protein. Its interaction with host VAPB may target the viral replication complex to vesicles. Down-regulates viral IRES translation initiation. Mediates interferon resistance, presumably by interacting with and inhibiting host EIF2AK2/PKR. Prevents BIN1-induced apoptosis. Acts as a transcriptional activator of some host genes important for viral replication when localized in the nucleus. Via the interaction with host PACSIN2, modulates lipid droplet formation in order to promote virion assembly. Modulates TNFRSF21/DR6 signaling pathway for viral propagation. RNA-dependent RNA polymerase that performs primer-template recognition and RNA synthesis during viral replication. Initiates RNA transcription/replication at a flavin adenine dinucleotide (FAD), resulting in a 5'- FAD cap on viral RNAs. In this way, recognition of viral 5' RNA by host pattern recognition receptors can be bypassed, thereby evading activation of antiviral pathways. The polypeptide is Genome polyprotein (Hepatitis C virus genotype 6d (isolate VN235) (HCV)).